Consider the following 546-residue polypeptide: Probable acyl-activating enzyme 21 (546 aa).

The protein belongs to the ATP-dependent AMP-binding enzyme family.

May act as an acid--thiol ligase that activates carboxylic acids by forming acyl-CoAs. This chain is Probable acyl-activating enzyme 21 (AEE21), found in Arabidopsis thaliana (Mouse-ear cress).